The chain runs to 74 residues: Conotoxin Cal27 (74 aa).

The first 19 residues, 1-19, serve as a signal peptide directing secretion; the sequence is MSGTGVLLLTLLLLVAMAA.

May contain 4 disulfide bonds. In terms of tissue distribution, expressed by the venom duct.

It localises to the secreted. Functionally, probable neurotoxin. This Californiconus californicus (California cone) protein is Conotoxin Cal27.